A 631-amino-acid polypeptide reads, in one-letter code: Phosphomethylpyrimidine synthase (631 aa).

Substrate-binding positions include N239, M268, Y297, H333, 353–355, 394–397, and E433; these read SRG and DGLR. Residue H437 coordinates Zn(2+). Y460 provides a ligand contact to substrate. H501 contributes to the Zn(2+) binding site. Residues C581, C584, and C589 each coordinate [4Fe-4S] cluster.

The protein belongs to the ThiC family. As to quaternary structure, homodimer. [4Fe-4S] cluster serves as cofactor.

The catalysed reaction is 5-amino-1-(5-phospho-beta-D-ribosyl)imidazole + S-adenosyl-L-methionine = 4-amino-2-methyl-5-(phosphooxymethyl)pyrimidine + CO + 5'-deoxyadenosine + formate + L-methionine + 3 H(+). It functions in the pathway cofactor biosynthesis; thiamine diphosphate biosynthesis. Its function is as follows. Catalyzes the synthesis of the hydroxymethylpyrimidine phosphate (HMP-P) moiety of thiamine from aminoimidazole ribotide (AIR) in a radical S-adenosyl-L-methionine (SAM)-dependent reaction. The chain is Phosphomethylpyrimidine synthase from Salmonella paratyphi C (strain RKS4594).